We begin with the raw amino-acid sequence, 109 residues long: Cell division protein ZapA (109 aa).

A coiled-coil region spans residues 21 to 100 (PDQRDALNQA…EQALLERGRI (80 aa)).

This sequence belongs to the ZapA family. Type 1 subfamily. As to quaternary structure, homodimer. Interacts with FtsZ.

The protein resides in the cytoplasm. Activator of cell division through the inhibition of FtsZ GTPase activity, therefore promoting FtsZ assembly into bundles of protofilaments necessary for the formation of the division Z ring. It is recruited early at mid-cell but it is not essential for cell division. In Shigella dysenteriae serotype 1 (strain Sd197), this protein is Cell division protein ZapA.